The following is a 149-amino-acid chain: Limonene-1,2-epoxide hydrolase (149 aa).

The active-site Proton donor is the Asp-101. Residue Asp-132 is the Proton acceptor of the active site.

The protein belongs to the limonene-1,2-epoxide hydrolase family. As to quaternary structure, monomer.

It catalyses the reaction limonene 1,2-epoxide + H2O = limonene-1,2-diol. The protein operates within terpene metabolism; (4R)-limonene degradation; (1S,4R)-1-hydroxylimonen-2-one from (4R)-limonene: step 2/3. Its function is as follows. Catalyzes the conversion of limonene-1,2-epoxide to limonene-1,2-diol. Can use both the (-) and (+) isomers of limonene-1,2-epoxide as substrates and also has some activity with 1-methylcyclohexene oxide, cyclohexene oxide and indene oxide as substrates. The chain is Limonene-1,2-epoxide hydrolase (limA) from Rhodococcus erythropolis (Arthrobacter picolinophilus).